Consider the following 347-residue polypeptide: Protein-glutamate methylesterase/protein-glutamine glutaminase 3 (347 aa).

One can recognise a Response regulatory domain in the interval 3-120 (QVFIVDDSAV…KNFLEESEIL (118 aa)). Position 54 is a 4-aspartylphosphate (Asp54). The 189-residue stretch at 159 to 347 (IDTTDKLIAI…SKIVGEVQYF (189 aa)) folds into the CheB-type methylesterase domain. Residues Ser171, His197, and Asp293 contribute to the active site.

The protein belongs to the CheB family. Post-translationally, phosphorylated by CheA. Phosphorylation of the N-terminal regulatory domain activates the methylesterase activity.

The protein resides in the cytoplasm. It carries out the reaction [protein]-L-glutamate 5-O-methyl ester + H2O = L-glutamyl-[protein] + methanol + H(+). The enzyme catalyses L-glutaminyl-[protein] + H2O = L-glutamyl-[protein] + NH4(+). In terms of biological role, involved in chemotaxis. Part of a chemotaxis signal transduction system that modulates chemotaxis in response to various stimuli. Catalyzes the demethylation of specific methylglutamate residues introduced into the chemoreceptors (methyl-accepting chemotaxis proteins or MCP) by CheR. Also mediates the irreversible deamidation of specific glutamine residues to glutamic acid. This is Protein-glutamate methylesterase/protein-glutamine glutaminase 3 from Leptospira interrogans serogroup Icterohaemorrhagiae serovar copenhageni (strain Fiocruz L1-130).